The sequence spans 158 residues: Cytochrome c-type biogenesis protein CcmE (158 aa).

Topologically, residues 1 to 8 (MNIRRRRR) are cytoplasmic. A helical; Signal-anchor for type II membrane protein transmembrane segment spans residues 9 to 29 (LLVVVAILVGLGLATGLVMYA). At 30 to 158 (LRSNIDLFYT…GLLNVSEPTR (129 aa)) the chain is on the periplasmic side. Residues His130 and Tyr134 each coordinate heme.

Belongs to the CcmE/CycJ family.

It is found in the cell inner membrane. In terms of biological role, heme chaperone required for the biogenesis of c-type cytochromes. Transiently binds heme delivered by CcmC and transfers the heme to apo-cytochromes in a process facilitated by CcmF and CcmH. This is Cytochrome c-type biogenesis protein CcmE from Tatumella citrea (Pantoea citrea).